The following is a 533-amino-acid chain: CEP295 N-terminal-like protein (533 aa).

Disordered regions lie at residues 1 to 40, 84 to 176, 286 to 333, and 370 to 399; these read MQRD…TTLQ, RSMG…RVTR, LKAD…ETTE, and AGTS…LEDE. A coiled-coil region spans residues 40-72; sequence QQWKARQLQRLAEELKAEWQEARLQQVRQAERL. Positions 107 to 126 are enriched in basic and acidic residues; the sequence is KERNRAAFREERGRREEHPR. Positions 416 to 531 form a coiled coil; the sequence is MALRQKQKAE…ARKRLQEFQK (116 aa).

As to expression, expressed in mature spermatozoa (at protein level). Detected in retina, lung and kidney. In brain, highly expressed in brain-stem, cerebral cortex and thalamus with lesser expression in cerebellum and hippocampus.

The protein resides in the cell projection. The protein localises to the cilium. The sequence is that of CEP295 N-terminal-like protein from Mus musculus (Mouse).